We begin with the raw amino-acid sequence, 555 residues long: Formate--tetrahydrofolate ligase (555 aa).

65–72 serves as a coordination point for ATP; sequence TPAGEGKS.

It belongs to the formate--tetrahydrofolate ligase family.

The enzyme catalyses (6S)-5,6,7,8-tetrahydrofolate + formate + ATP = (6R)-10-formyltetrahydrofolate + ADP + phosphate. It participates in one-carbon metabolism; tetrahydrofolate interconversion. This chain is Formate--tetrahydrofolate ligase, found in Staphylococcus aureus (strain bovine RF122 / ET3-1).